The chain runs to 1037 residues: MDRARPGRRRASSEIVTEGKRKKSSPADLQKITKLLTVKSEDVLAQSPLPKLRGSECWWTRSLRNKVICLDHKTTKAAHGCPPKALPKRHLKVMLTNVLWTDLGREFRKTLPRNDAKLCDTSKVQSDSLPSTSVDSIETCQRLDPLHQSLNLSERIPRVILTDIRQTELGRKYLKIPSVTEASLSDTASPKSEELSSSADGSLESCQNVNHLKSFLSERGSKPSRTGDISAKEAANGRQEQGDDGDIAPEMVTPQSKDFNSGNKGDYHEEGTSNKNTSYSHSETDHTPVSRKRKKRGRSNFHNSHNPKSSVDKSTEYIKEEENESTVSSKLEESNEDSHQDPAPPEGLTPDSLETEATNVCSFVVQEPDVSAASGRACSPNKSSESSVSSEVAENSSAAEKGEASTVKEAPPPGGNSEENQLLMSAEPIVVSSDEEGPVEHKNSVILKLQPSQDYEFMSENQTTSDPQLSELMLGACESVQVSSELCPYNPDMENISCINPNSEMDLKLDFIFTCVYIGKIKGTSKGCITFTKKYIKIPFQVSMNEISLTVDTARLKRFGLWESKDDDHSKRSHAILFLWVSSNYLQDIQTQLENPMLSQQSKANEFIFLELNSPISQREELKLKDIMMEIGATNGELQLSCPLPWVQAFPLFQDLSPQEISFLHYYCASASSFPAVAGADMKKKPVSQPSNADVVKPTYTFLHKQSSGCYSLSITSSPDEEWREVRNTGPVQKLIVYPPPPTKGGLGVTNEDLECLEEGEFLNDVIIDFYLKYLLLEKASDELVERSHIFSSFFYKCLTRKENNLTEDNPDLSVAQRRHRRVRTWTRHINIFNKDYIFVPVNESSHWYLAVICFPWLEEAVYEDFPQTVSQEFQDQQSQHDNKTIDNDPHTTSTVFTSAEESQSTETSMSVPKKMCKRPCILILDSLKAASIQNTVQNLREYLEVEWEVKRKTHREFSKTNMVDLCPKVPKQDNSSDCGVYLLQYVESFFQDPIVNFELPIHLEKWFPRHVIKTKREDIRELILKLHLQQQKGSSS.

The segment covering 1 to 10 (MDRARPGRRR) has biased composition (basic residues). 2 disordered regions span residues 1–28 (MDRA…SPAD) and 182–420 (ASLS…SEEN). Phosphoserine is present on residues serine 12, serine 13, serine 25, and serine 189. Polar residues-rich tracts occupy residues 182–211 (ASLS…NVNH) and 253–263 (TPQSKDFNSGN). The span at 289–299 (VSRKRKKRGRS) shows a compositional bias: basic residues. A compositionally biased stretch (polar residues) spans 300–309 (NFHNSHNPKS). 2 stretches are compositionally biased toward basic and acidic residues: residues 310–320 (SVDKSTEYIKE) and 330–340 (KLEESNEDSHQ). The segment covering 381-399 (NKSSESSVSSEVAENSSAA) has biased composition (low complexity). Phosphoserine is present on residues serine 432 and serine 433. Residues 747–1037 (LGVTNEDLEC…HLQQQKGSSS (291 aa)) form a protease region. Histidine 847 is an active-site residue. The disordered stretch occupies residues 873-910 (EFQDQQSQHDNKTIDNDPHTTSTVFTSAEESQSTETSM). A compositionally biased stretch (basic and acidic residues) spans 879–890 (SQHDNKTIDNDP). The span at 898–910 (TSAEESQSTETSM) shows a compositional bias: low complexity. Aspartate 926 is an active-site residue. Cysteine 979 (nucleophile) is an active-site residue.

Belongs to the peptidase C48 family.

It is found in the cytoplasm. In terms of biological role, protease that acts as a positive regulator of the cGAS-STING pathway by catalyzing desumoylation of CGAS. Desumoylation of CGAS promotes DNA-binding activity of CGAS, subsequent oligomerization and activation. Deconjugates SUMO2 and SUMO3 from targeted proteins, but not SUMO1. Catalyzes the deconjugation of poly-SUMO2 and poly-SUMO3 chains. Has very low efficiency in processing full-length SUMO proteins to their mature forms. The polypeptide is Sentrin-specific protease 7 (Senp7) (Rattus norvegicus (Rat)).